A 576-amino-acid polypeptide reads, in one-letter code: Aspartate--tRNA ligase, cytoplasmic 1 (576 aa).

Residues 1-78 (MSETTPVPVG…NWGELPMNQS (78 aa)) form a disordered region. Over residues 20–43 (LKKEQKKLEKEKKIAEAKAKKAAE) the composition is skewed to basic and acidic residues. Glu-302 is an L-aspartate binding site. An aspartate region spans residues 324-327 (QLYK). Arg-346 is an L-aspartate binding site. Residues 346–348 (RAE), 354–356 (RHL), and Glu-499 each bind ATP. Residues Ser-502 and Arg-506 each coordinate L-aspartate. An ATP-binding site is contributed by 547–550 (GLER).

This sequence belongs to the class-II aminoacyl-tRNA synthetase family. Type 2 subfamily.

Its subcellular location is the cytoplasm. It catalyses the reaction tRNA(Asp) + L-aspartate + ATP = L-aspartyl-tRNA(Asp) + AMP + diphosphate. In Dictyostelium discoideum (Social amoeba), this protein is Aspartate--tRNA ligase, cytoplasmic 1 (aspS1).